A 509-amino-acid chain; its full sequence is Hyaluronidase PH-20 (509 aa).

Residues 1–35 (MGVLKFKHIFFRSFVKSSGVSQIVFTFLLIPCCLT) form the signal peptide. 2 disulfide bridges follow: Cys-60–Cys-351 and Cys-224–Cys-238. Asn-82 is a glycosylation site (N-linked (GlcNAc...) asparagine). Glu-148 acts as the Proton donor in catalysis. Asn-166, Asn-235, Asn-254, and Asn-368 each carry an N-linked (GlcNAc...) asparagine glycan. Intrachain disulfides connect Cys-376-Cys-387, Cys-381-Cys-435, and Cys-437-Cys-464. An N-linked (GlcNAc...) asparagine glycan is attached at Asn-393. The GPI-anchor amidated serine moiety is linked to residue Ser-490. Residues 491–509 (ATMFIVSILFLIISSVASL) constitute a propeptide, removed in mature form.

It belongs to the glycosyl hydrolase 56 family. In terms of processing, N-glycosylated. Testis.

The protein resides in the cell membrane. It carries out the reaction Random hydrolysis of (1-&gt;4)-linkages between N-acetyl-beta-D-glucosamine and D-glucuronate residues in hyaluronate.. In terms of biological role, involved in sperm-egg adhesion. Upon fertilization sperm must first penetrate a layer of cumulus cells that surrounds the egg before reaching the zona pellucida. The cumulus cells are embedded in a matrix containing hyaluronic acid which is formed prior to ovulation. This protein aids in penetrating the layer of cumulus cells by digesting hyaluronic acid. This is Hyaluronidase PH-20 (SPAM1) from Homo sapiens (Human).